Here is a 1183-residue protein sequence, read N- to C-terminus: PAN2-PAN3 deadenylation complex catalytic subunit PAN2 (1183 aa).

2 WD repeats span residues 150-189 and 289-328; these read SIEN…KAAQ and DVSS…ENAA. The linker stretch occupies residues 331–478; sequence ENGSIVLPPF…EEIEEELNDG (148 aa). The disordered stretch occupies residues 439–470; the sequence is AEGRARGKGRRDSGPRFRSEKDKKGTYKDKEE. The span at 448-469 shows a compositional bias: basic and acidic residues; the sequence is RRDSGPRFRSEKDKKGTYKDKE. The USP domain occupies 479–864; the sequence is EVPKYYRKVE…VPAVIILERE (386 aa). The Exonuclease domain occupies 916–1085; that stretch reads VAIDAEFVAL…HDSIEDAHFA (170 aa). The a divalent metal cation site is built by D919, E921, D1028, and D1081. A disordered region spans residues 1155-1183; sequence KSRMATPPPPTKLGLPQWASQNSPSPLRR. The span at 1172 to 1183 shows a compositional bias: polar residues; the sequence is WASQNSPSPLRR.

The protein belongs to the peptidase C19 family. PAN2 subfamily. In terms of assembly, forms a heterotrimer with an asymmetric homodimer of the regulatory subunit PAN3 to form the poly(A)-nuclease (PAN) deadenylation complex. Requires a divalent metal cation as cofactor.

The protein resides in the cytoplasm. The enzyme catalyses Exonucleolytic cleavage of poly(A) to 5'-AMP.. Positively regulated by the regulatory subunit PAN3. In terms of biological role, catalytic subunit of the poly(A)-nuclease (PAN) deadenylation complex, one of two cytoplasmic mRNA deadenylases involved in mRNA turnover. PAN specifically shortens poly(A) tails of RNA and the activity is stimulated by poly(A)-binding protein PAB1. PAN deadenylation is followed by rapid degradation of the shortened mRNA tails by the CCR4-NOT complex. Deadenylated mRNAs are then degraded by two alternative mechanisms, namely exosome-mediated 3'-5' exonucleolytic degradation, or deadenylation-dependent mRNA decaping and subsequent 5'-3' exonucleolytic degradation by XRN1. May also be involved in post-transcriptional maturation of mRNA poly(A) tails. The polypeptide is PAN2-PAN3 deadenylation complex catalytic subunit PAN2 (Cryptococcus neoformans var. neoformans serotype D (strain B-3501A) (Filobasidiella neoformans)).